The chain runs to 513 residues: MQLNSTEISELIKKRIAQFNVVSEAQSTGTIVSVSDGIIRIHGLADVMQGEMIELPGNRYAIALNLERDSVGAVVMGPYADLAEGMTVKCTGRILEVPVGKGLLGRVVNTLGQPIDGKGEIDNDGFSPVEVIAPGVIDRQSVDQPVQTGYKAVDSMVPIGRGQRELIIGDRQTGKTSLVIDAIIAQRDSGIKCIYVAIGQKASTIANVVRKLEEHGALANTIVVVASASESAALQYLAPYSGCAMGEYFRDRGEDALIVYDDLSKQAVAYRQISLLLRRPPGREAFPGDVFYLHSRLLERAARVNAEYVERFTNGAVTGRTGSLTALPIIETQAGDVSAFVPTNVISITDGQIFLESSLFNSGIRPAVNPGISVSRVGSAAQTKVIKKLSGGIRTALAQYRELAAFAQFASDLDDATRKQLSHGQKVTELLKQKQFAPMPVSEQALVLFAAEFGYLDGVELERISSFESALLAYANSNHADFMKDLAKSGNFNDSIQQELKTIVENFKKNGAW.

169 to 176 (GDRQTGKT) provides a ligand contact to ATP.

This sequence belongs to the ATPase alpha/beta chains family. In terms of assembly, F-type ATPases have 2 components, CF(1) - the catalytic core - and CF(0) - the membrane proton channel. CF(1) has five subunits: alpha(3), beta(3), gamma(1), delta(1), epsilon(1). CF(0) has three main subunits: a(1), b(2) and c(9-12). The alpha and beta chains form an alternating ring which encloses part of the gamma chain. CF(1) is attached to CF(0) by a central stalk formed by the gamma and epsilon chains, while a peripheral stalk is formed by the delta and b chains.

It is found in the cell inner membrane. The enzyme catalyses ATP + H2O + 4 H(+)(in) = ADP + phosphate + 5 H(+)(out). In terms of biological role, produces ATP from ADP in the presence of a proton gradient across the membrane. The alpha chain is a regulatory subunit. The chain is ATP synthase subunit alpha from Haemophilus ducreyi (strain 35000HP / ATCC 700724).